The following is a 101-amino-acid chain: Large ribosomal subunit protein uL23 (101 aa).

This sequence belongs to the universal ribosomal protein uL23 family. In terms of assembly, part of the 50S ribosomal subunit. Contacts protein L29, and trigger factor when it is bound to the ribosome.

Functionally, one of the early assembly proteins it binds 23S rRNA. One of the proteins that surrounds the polypeptide exit tunnel on the outside of the ribosome. Forms the main docking site for trigger factor binding to the ribosome. This is Large ribosomal subunit protein uL23 from Tolumonas auensis (strain DSM 9187 / NBRC 110442 / TA 4).